The primary structure comprises 382 residues: MIOREX complex component 5 (382 aa).

A mitochondrion-targeting transit peptide spans 1 to 12 (MRRTFSQLATRL).

Associates with the mitochondrial ribosome.

The protein resides in the mitochondrion. Functionally, component of MIOREX complexes, large expressome-like assemblies of ribosomes with factors involved in all the steps of post-transcriptional gene expression. The sequence is that of MIOREX complex component 5 from Saccharomyces cerevisiae (strain ATCC 204508 / S288c) (Baker's yeast).